Consider the following 306-residue polypeptide: Protein YIPF1 (306 aa).

Over 1–119 (MAAVDDLQFE…VRLYIRSNPD (119 aa)) the chain is Cytoplasmic. Positions 14 to 62 (NAATSLTANPDATTVNIEDPGETPKHQPGSPRGSGREEDDELLGNDDSD) are disordered. Polar residues predominate over residues 15 to 29 (AATSLTANPDATTVN). The span at 50–59 (EEDDELLGND) shows a compositional bias: acidic residues. The chain crosses the membrane as a helical span at residues 120-140 (LYGPFWICATLVFAIAISGNL). Topologically, residues 141 to 162 (SNFLIHLGEKTYHYVPEFRKVS) are lumenal. The helical transmembrane segment at 163–183 (IAATIIYAYAWLVPLALWGFL) threads the bilayer. Residues 184 to 200 (MWRNSKVMNIVSYSFLE) are Cytoplasmic-facing. A helical transmembrane segment spans residues 201 to 221 (IVCVYGYSLFIYIPTAILWII). Over 222 to 227 (PQKAVR) the chain is Lumenal. The helical transmembrane segment at 228 to 248 (WILVMIALGISGSLLAMTFWP) threads the bilayer. Residues 249 to 256 (AVREDNRR) are Cytoplasmic-facing. Residues 257-277 (VALATIVTIVLLHMLLSVGCL) form a helical membrane-spanning segment. Residues 278 to 306 (AYFFDAPEMDHLPTTTATPNQTVAAAKSS) are Lumenal-facing. N-linked (GlcNAc...) asparagine glycosylation is present at Asn297.

This sequence belongs to the YIP1 family. Interacts with YIPF6; this interaction may stabilize YIPF1. May also form a ternary complex with YIPF2 and YIPF6.

Its subcellular location is the golgi apparatus. It is found in the cis-Golgi network membrane. It localises to the trans-Golgi network membrane. The protein resides in the late endosome membrane. In Homo sapiens (Human), this protein is Protein YIPF1 (YIPF1).